The chain runs to 194 residues: MTGPFDDDGPEEDAPVPAPPDHLAGLRGIDLVRRTLEEARGAARSQGKDVGRGRSGPARRVGGNRRRRTWSGPGPDARDPQLLGAVTQDLAKSRGWSARVAEGSVIGRWRAVVGDQIADHATPTALNEGVLTVTAESTAWATQLRMVQSQLLAKIAAVVGDGVVTTLKIVGPAGPSWRKGRYHVSGRGPRDTYG.

The span at 1 to 14 (MTGPFDDDGPEEDA) shows a compositional bias: acidic residues. The interval 1-81 (MTGPFDDDGP…GPGPDARDPQ (81 aa)) is disordered. A compositionally biased stretch (basic and acidic residues) spans 30 to 52 (DLVRRTLEEARGAARSQGKDVGR).

Belongs to the UPF0232 family.

In Mycolicibacterium smegmatis (strain ATCC 700084 / mc(2)155) (Mycobacterium smegmatis), this protein is UPF0232 protein MSMEG_0004/MSMEI_0006.